We begin with the raw amino-acid sequence, 137 residues long: Putative pre-16S rRNA nuclease (137 aa).

Belongs to the YqgF nuclease family.

The protein resides in the cytoplasm. Could be a nuclease involved in processing of the 5'-end of pre-16S rRNA. The sequence is that of Putative pre-16S rRNA nuclease from Clostridium kluyveri (strain NBRC 12016).